Here is a 555-residue protein sequence, read N- to C-terminus: Xylulose kinase (555 aa).

Substrate is bound by residues H88, R158, D274, and N275. ATP contacts are provided by residues W357, 455 to 456, and N459; that span reads GA.

Belongs to the FGGY kinase family.

The protein localises to the cytoplasm. It carries out the reaction D-xylulose + ATP = D-xylulose 5-phosphate + ADP + H(+). This chain is Xylulose kinase, found in Schizosaccharomyces pombe (strain 972 / ATCC 24843) (Fission yeast).